A 30-amino-acid polypeptide reads, in one-letter code: Kalata-B5 (30 aa).

The cyclopeptide (Gly-Asn) cross-link spans 1 to 30; it reads GTPCGESCVYIPCISGVIGCSCTDKVCYLN. 3 disulfide bridges follow: Cys4-Cys20, Cys8-Cys22, and Cys13-Cys27.

In terms of processing, this is a cyclic peptide.

Functionally, probably participates in a plant defense mechanism. This chain is Kalata-B5, found in Oldenlandia affinis.